The chain runs to 92 residues: UPF0250 protein Smlt4048 (92 aa).

It belongs to the UPF0250 family.

The protein is UPF0250 protein Smlt4048 of Stenotrophomonas maltophilia (strain K279a).